Here is a 372-residue protein sequence, read N- to C-terminus: Methylthioribose-1-phosphate isomerase 2 (372 aa).

The active-site Proton donor is Asp254.

This sequence belongs to the eIF-2B alpha/beta/delta subunits family. MtnA subfamily.

Its subcellular location is the cytoplasm. It is found in the nucleus. The enzyme catalyses 5-(methylsulfanyl)-alpha-D-ribose 1-phosphate = 5-(methylsulfanyl)-D-ribulose 1-phosphate. The protein operates within amino-acid biosynthesis; L-methionine biosynthesis via salvage pathway; L-methionine from S-methyl-5-thio-alpha-D-ribose 1-phosphate: step 1/6. Its function is as follows. Catalyzes the interconversion of methylthioribose-1-phosphate (MTR-1-P) into methylthioribulose-1-phosphate (MTRu-1-P). The polypeptide is Methylthioribose-1-phosphate isomerase 2 (Trypanosoma cruzi (strain CL Brener)).